Here is a 464-residue protein sequence, read N- to C-terminus: Chromosomal replication initiator protein DnaA (464 aa).

The segment at 1-74 (MDAVGYEVFW…ERKFLELSGH (74 aa)) is domain I, interacts with DnaA modulators. The segment at 74-117 (HPIKLLFAVKKGTPHGNTAPPKHVHTYLEKNSPAEVPSKKSFHP) is domain II. The domain III, AAA+ region stretch occupies residues 118–341 (DLNRDYTFEN…GALTKIIAFI (224 aa)). Positions 162, 164, 165, and 166 each coordinate ATP. Residues 342-464 (EVSGSITIDI…LKSKVQDSIR (123 aa)) are domain IV, binds dsDNA.

Belongs to the DnaA family. As to quaternary structure, oligomerizes as a right-handed, spiral filament on DNA at oriC.

Its subcellular location is the cytoplasm. In terms of biological role, plays an essential role in the initiation and regulation of chromosomal replication. ATP-DnaA binds to the origin of replication (oriC) to initiate formation of the DNA replication initiation complex once per cell cycle. Binds the DnaA box (a 9 base pair repeat at the origin) and separates the double-stranded (ds)DNA. Forms a right-handed helical filament on oriC DNA; dsDNA binds to the exterior of the filament while single-stranded (ss)DNA is stabiized in the filament's interior. The ATP-DnaA-oriC complex binds and stabilizes one strand of the AT-rich DNA unwinding element (DUE), permitting loading of DNA polymerase. After initiation quickly degrades to an ADP-DnaA complex that is not apt for DNA replication. Binds acidic phospholipids. This is Chromosomal replication initiator protein DnaA from Treponema pallidum (strain Nichols).